The sequence spans 328 residues: 5,10-methylenetetrahydromethanopterin reductase (328 aa).

It belongs to the mer family.

It localises to the cytoplasm. It catalyses the reaction 5-methyl-5,6,7,8-tetrahydromethanopterin + oxidized coenzyme F420-(gamma-L-Glu)(n) + H(+) = 5,10-methylenetetrahydromethanopterin + reduced coenzyme F420-(gamma-L-Glu)(n). It participates in one-carbon metabolism; methanogenesis from CO(2); methyl-coenzyme M from 5,10-methylene-5,6,7,8-tetrahydromethanopterin: step 1/2. In terms of biological role, catalyzes the reversible reduction of methylene-H(4)MPT to methyl-H(4)MPT. The sequence is that of 5,10-methylenetetrahydromethanopterin reductase from Methanosarcina acetivorans (strain ATCC 35395 / DSM 2834 / JCM 12185 / C2A).